We begin with the raw amino-acid sequence, 542 residues long: Chaperonin GroEL (542 aa).

ATP is bound by residues Thr-29–Pro-32, Lys-50, Asp-86–Thr-90, Gly-415, and Asp-495.

This sequence belongs to the chaperonin (HSP60) family. In terms of assembly, forms a cylinder of 14 subunits composed of two heptameric rings stacked back-to-back. Interacts with the co-chaperonin GroES.

The protein localises to the cytoplasm. It carries out the reaction ATP + H2O + a folded polypeptide = ADP + phosphate + an unfolded polypeptide.. In terms of biological role, together with its co-chaperonin GroES, plays an essential role in assisting protein folding. The GroEL-GroES system forms a nano-cage that allows encapsulation of the non-native substrate proteins and provides a physical environment optimized to promote and accelerate protein folding. The sequence is that of Chaperonin GroEL from Flavobacterium psychrophilum (strain ATCC 49511 / DSM 21280 / CIP 103535 / JIP02/86).